The chain runs to 140 residues: Probable disulfide formation protein C 2 (140 aa).

The helical transmembrane segment at 6 to 25 threads the bilayer; it reads KYHIAIAWTIATSAMLISLI. C35 and C38 are disulfide-bonded. 2 helical membrane-spanning segments follow: residues 40–59 and 66–83; these read YQRMAMYPLVLILGIGMYRK and YAFPFACIGLIISVYQIT. C95 and C101 are joined by a disulfide. The chain crosses the membrane as a helical span at residues 110–134; it reads GFISIPMLSFVGFLAIIILLYINQI.

This sequence belongs to the DsbB family. BdbC subfamily.

Its subcellular location is the cell membrane. Required for disulfide bond formation in some proteins. The sequence is that of Probable disulfide formation protein C 2 (bdbC2) from Bacillus anthracis.